A 738-amino-acid chain; its full sequence is DNA ligase (738 aa).

NAD(+) contacts are provided by residues 48–52 (DVVYD), 97–98 (SL), and Glu136. The N6-AMP-lysine intermediate role is filled by Lys138. 4 residues coordinate NAD(+): Arg159, Glu196, Lys356, and Lys380. Zn(2+) is bound by residues Cys474, Cys477, Cys492, and Cys497. A BRCT domain is found at 659–738 (QLPQPLAGKT…SQLLELLEET (80 aa)).

This sequence belongs to the NAD-dependent DNA ligase family. LigA subfamily. Mg(2+) serves as cofactor. Requires Mn(2+) as cofactor.

The enzyme catalyses NAD(+) + (deoxyribonucleotide)n-3'-hydroxyl + 5'-phospho-(deoxyribonucleotide)m = (deoxyribonucleotide)n+m + AMP + beta-nicotinamide D-nucleotide.. Functionally, DNA ligase that catalyzes the formation of phosphodiester linkages between 5'-phosphoryl and 3'-hydroxyl groups in double-stranded DNA using NAD as a coenzyme and as the energy source for the reaction. It is essential for DNA replication and repair of damaged DNA. In Cyanothece sp. (strain PCC 7425 / ATCC 29141), this protein is DNA ligase.